A 313-amino-acid chain; its full sequence is Hydroxyacylglutathione hydrolase, mitochondrial (313 aa).

Zn(2+) contacts are provided by His107, His109, Asp111, His112, His163, and Asp187. Residues 196–198 and 226–228 contribute to the substrate site; these read KFF and HEY. His226 provides a ligand contact to Zn(2+). Basic and acidic residues-rich tracts occupy residues 285-294 and 301-313; these read VQEHAGERDP and IRKEKDHFKVPKD. The interval 285–313 is disordered; it reads VQEHAGERDPISTMGAIRKEKDHFKVPKD. 302 to 305 is a substrate binding site; the sequence is RKEK.

It belongs to the metallo-beta-lactamase superfamily. Glyoxalase II family. As to quaternary structure, monomer. It depends on Zn(2+) as a cofactor.

The protein resides in the mitochondrion matrix. The protein localises to the cytoplasm. It catalyses the reaction an S-(2-hydroxyacyl)glutathione + H2O = a 2-hydroxy carboxylate + glutathione + H(+). The catalysed reaction is (R)-S-lactoylglutathione + H2O = (R)-lactate + glutathione + H(+). Its function is as follows. Thiolesterase that catalyzes the hydrolysis of S-D-lactoyl-glutathione to form glutathione and D-lactic acid. The protein is Hydroxyacylglutathione hydrolase, mitochondrial (hagh) of Xenopus tropicalis (Western clawed frog).